Here is a 484-residue protein sequence, read N- to C-terminus: UDP-N-acetylmuramate--L-alanine ligase (484 aa).

Position 128–134 (glycine 128–threonine 134) interacts with ATP.

This sequence belongs to the MurCDEF family.

The protein localises to the cytoplasm. It carries out the reaction UDP-N-acetyl-alpha-D-muramate + L-alanine + ATP = UDP-N-acetyl-alpha-D-muramoyl-L-alanine + ADP + phosphate + H(+). It participates in cell wall biogenesis; peptidoglycan biosynthesis. In terms of biological role, cell wall formation. The sequence is that of UDP-N-acetylmuramate--L-alanine ligase from Shewanella loihica (strain ATCC BAA-1088 / PV-4).